Here is a 77-residue protein sequence, read N- to C-terminus: UPF0349 protein lin2491 (77 aa).

The protein belongs to the UPF0349 family.

The chain is UPF0349 protein lin2491 from Listeria innocua serovar 6a (strain ATCC BAA-680 / CLIP 11262).